The sequence spans 506 residues: Kynurenine 3-monooxygenase (506 aa).

Belongs to the aromatic-ring hydroxylase family. KMO subfamily. It depends on FAD as a cofactor.

It localises to the mitochondrion outer membrane. It catalyses the reaction L-kynurenine + NADPH + O2 + H(+) = 3-hydroxy-L-kynurenine + NADP(+) + H2O. The protein operates within cofactor biosynthesis; NAD(+) biosynthesis; quinolinate from L-kynurenine: step 1/3. Catalyzes the hydroxylation of L-kynurenine (L-Kyn) to form 3-hydroxy-L-kynurenine (L-3OHKyn). Required for synthesis of quinolinic acid. The sequence is that of Kynurenine 3-monooxygenase (bna4) from Emericella nidulans (strain FGSC A4 / ATCC 38163 / CBS 112.46 / NRRL 194 / M139) (Aspergillus nidulans).